Reading from the N-terminus, the 150-residue chain is UPF0756 membrane protein ABAYE1440 (150 aa).

Helical transmembrane passes span 1-21 (MLAQ…CGLL), 45-65 (FFPY…TIGV), 83-103 (FISF…WLGG), and 115-135 (VVAG…GVPV).

The protein belongs to the UPF0756 family.

The protein resides in the cell membrane. The chain is UPF0756 membrane protein ABAYE1440 from Acinetobacter baumannii (strain AYE).